A 539-amino-acid chain; its full sequence is Phosphoenolpyruvate carboxykinase (ATP) (539 aa).

Positions 64, 206, and 212 each coordinate substrate. Residues Lys-212, His-231, and 247–255 (GLSGTGKTT) contribute to the ATP site. Mn(2+) contacts are provided by Lys-212 and His-231. A Mn(2+)-binding site is contributed by Asp-268. Residues Glu-296, Arg-332, 448–449 (RI), and Thr-454 each bind ATP. Arg-332 is a binding site for substrate.

This sequence belongs to the phosphoenolpyruvate carboxykinase (ATP) family. Monomer. Mn(2+) is required as a cofactor.

Its subcellular location is the cytoplasm. The catalysed reaction is oxaloacetate + ATP = phosphoenolpyruvate + ADP + CO2. Its pathway is carbohydrate biosynthesis; gluconeogenesis. Functionally, involved in the gluconeogenesis. Catalyzes the conversion of oxaloacetate (OAA) to phosphoenolpyruvate (PEP) through direct phosphoryl transfer between the nucleoside triphosphate and OAA. This is Phosphoenolpyruvate carboxykinase (ATP) from Citrobacter koseri (strain ATCC BAA-895 / CDC 4225-83 / SGSC4696).